The primary structure comprises 326 residues: Tagatose 1,6-diphosphate aldolase (326 aa).

This sequence belongs to the aldolase LacD family.

The enzyme catalyses D-tagatofuranose 1,6-bisphosphate = D-glyceraldehyde 3-phosphate + dihydroxyacetone phosphate. The protein operates within carbohydrate metabolism; D-tagatose 6-phosphate degradation; D-glyceraldehyde 3-phosphate and glycerone phosphate from D-tagatose 6-phosphate: step 2/2. This Staphylococcus aureus (strain MW2) protein is Tagatose 1,6-diphosphate aldolase.